A 59-amino-acid chain; its full sequence is Large ribosomal subunit protein bL32 (59 aa).

A compositionally biased stretch (basic residues) spans Met1–His19. The tract at residues Met1–Asp20 is disordered.

This sequence belongs to the bacterial ribosomal protein bL32 family.

This is Large ribosomal subunit protein bL32 from Maridesulfovibrio salexigens (strain ATCC 14822 / DSM 2638 / NCIMB 8403 / VKM B-1763) (Desulfovibrio salexigens).